We begin with the raw amino-acid sequence, 509 residues long: MDIRAAEISAILKDQIKNFGQEAEVSEVGQVLSVGDGIARVYGLDNVQAGEMVEFENGTRGMALNLETDNVGVVIFGADREIKEGQTVKRTRAIVDAPVGKGLLGRVVDALGNPIDGKGPIQADKRMRVDVKAPGIIPRKSVSEPMATGLKAIDALIPIGRGQRELIIGDRQTGKTAIALDTILNQKPLNAQPDENIKLYCVYVAVGQKRSTVAQFVKVLEEQGALEYSIIVAATASDPAPMQYIAPFTACTMGEFFRDNGMHAVIIYDDLSKQAVAYRQMSLLLRRPPGREAYPGDVFYLHSRLLERAAKLSKDHGSGSLTALPIIETQANDVSAYIPTNVISITDGQIFLETDLFFQGIRPAVNVGLSVSRVGSSAQTKATKKVAGKIKGELAQYREMAAFAQFGSDLDASTQRLLNRGSRLTELLKQPQFSPLKMEEQVCVIWAGTNGYLDPLPVNKVRAFEDGLLSLLRGKNVEILNSIRDSRDLSDDTAAKLKSVVEGFAKSFA.

169–176 (GDRQTGKT) provides a ligand contact to ATP.

The protein belongs to the ATPase alpha/beta chains family. As to quaternary structure, F-type ATPases have 2 components, CF(1) - the catalytic core - and CF(0) - the membrane proton channel. CF(1) has five subunits: alpha(3), beta(3), gamma(1), delta(1), epsilon(1). CF(0) has three main subunits: a(1), b(2) and c(9-12). The alpha and beta chains form an alternating ring which encloses part of the gamma chain. CF(1) is attached to CF(0) by a central stalk formed by the gamma and epsilon chains, while a peripheral stalk is formed by the delta and b chains.

It is found in the cell inner membrane. The enzyme catalyses ATP + H2O + 4 H(+)(in) = ADP + phosphate + 5 H(+)(out). Produces ATP from ADP in the presence of a proton gradient across the membrane. The alpha chain is a regulatory subunit. This Bradyrhizobium diazoefficiens (strain JCM 10833 / BCRC 13528 / IAM 13628 / NBRC 14792 / USDA 110) protein is ATP synthase subunit alpha.